The primary structure comprises 284 residues: MTKPDLASLEKTIEKAFDQRDGINTATRGEVREAVEQSLILLDRGEVRVAEKQADGNWHVNQWLKKAVLLSFRLNPMEVIKGGPGQSSWWDKVPSKFDGWTANEFEKAGFRAVPNCIVRHSAYIAPNAILMPSFVNLGAYVDKGAMIDTWATVGSCAQIGKNVHLSGGVGIGGVLEPMQAGPTIIEDNCFIGARSEVVEGCIVREGSVLGMGVFIGKSTKIVDRATGEVFYGEVPPYSVVVAGTMPGKNVPGENWGPSLYCAVIVKRADEKTRSKTSINELLRD.

Arginine 111 and aspartate 148 together coordinate substrate.

It belongs to the transferase hexapeptide repeat family. As to quaternary structure, homotrimer.

It is found in the cytoplasm. The enzyme catalyses (S)-2,3,4,5-tetrahydrodipicolinate + succinyl-CoA + H2O = (S)-2-succinylamino-6-oxoheptanedioate + CoA. It participates in amino-acid biosynthesis; L-lysine biosynthesis via DAP pathway; LL-2,6-diaminopimelate from (S)-tetrahydrodipicolinate (succinylase route): step 1/3. In Brucella suis (strain ATCC 23445 / NCTC 10510), this protein is 2,3,4,5-tetrahydropyridine-2,6-dicarboxylate N-succinyltransferase.